Here is a 624-residue protein sequence, read N- to C-terminus: Glycosyltransferase AglD (624 aa).

The active site involves aspartate 201. Helical transmembrane passes span 260-280 (VTIV…TLYI), 285-305 (VISV…VIYV), 381-401 (LLTI…TGGL), 427-447 (AAYV…GIAL), 496-518 (VGLT…LLAL), 532-552 (FFAV…GGVG), 556-576 (IAFT…ALAA), and 587-607 (VTIV…TTAV).

It belongs to the glycosyltransferase 2 family.

Its subcellular location is the cell membrane. It functions in the pathway cell surface structure biogenesis; S-layer biogenesis. Its function is as follows. Involved in the assembly of a N-linked pentasaccharide that decorates the S-layer glycoprotein and flagellins. Catalyzes the addition of the mannose found at position 5 of the pentasaccharide to its own distinct dolichol phosphate carrier. The polypeptide is Glycosyltransferase AglD (aglD) (Haloferax volcanii (strain ATCC 29605 / DSM 3757 / JCM 8879 / NBRC 14742 / NCIMB 2012 / VKM B-1768 / DS2) (Halobacterium volcanii)).